The sequence spans 476 residues: Dihydrolipoyl dehydrogenase (476 aa).

Residues 36 to 45 (EHQERLGGVC), lysine 54, and alanine 117 each bind FAD. Cysteine 45 and cysteine 50 are disulfide-bonded. NAD(+) contacts are provided by residues 182-186 (GGGII), aspartate 205, valine 238, and 271-274 (AIGR). FAD is bound by residues aspartate 314 and alanine 322. The active-site Proton acceptor is histidine 446.

The protein belongs to the class-I pyridine nucleotide-disulfide oxidoreductase family. Homodimer. FAD is required as a cofactor.

The protein resides in the cytoplasm. It carries out the reaction N(6)-[(R)-dihydrolipoyl]-L-lysyl-[protein] + NAD(+) = N(6)-[(R)-lipoyl]-L-lysyl-[protein] + NADH + H(+). Lipoamide dehydrogenase is a component of the alpha-ketoacid dehydrogenase complexes. The chain is Dihydrolipoyl dehydrogenase (lpdA) from Buchnera aphidicola subsp. Schizaphis graminum (strain Sg).